The chain runs to 194 residues: ATP-dependent Clp protease proteolytic subunit 3 (194 aa).

Catalysis depends on Ser96, which acts as the Nucleophile. The active site involves His121.

Belongs to the peptidase S14 family. In terms of assembly, fourteen ClpP subunits assemble into 2 heptameric rings which stack back to back to give a disk-like structure with a central cavity, resembling the structure of eukaryotic proteasomes.

Its subcellular location is the cytoplasm. It catalyses the reaction Hydrolysis of proteins to small peptides in the presence of ATP and magnesium. alpha-casein is the usual test substrate. In the absence of ATP, only oligopeptides shorter than five residues are hydrolyzed (such as succinyl-Leu-Tyr-|-NHMec, and Leu-Tyr-Leu-|-Tyr-Trp, in which cleavage of the -Tyr-|-Leu- and -Tyr-|-Trp bonds also occurs).. Functionally, cleaves peptides in various proteins in a process that requires ATP hydrolysis. Has a chymotrypsin-like activity. Plays a major role in the degradation of misfolded proteins. This chain is ATP-dependent Clp protease proteolytic subunit 3, found in Rhizobium etli (strain ATCC 51251 / DSM 11541 / JCM 21823 / NBRC 15573 / CFN 42).